Reading from the N-terminus, the 205-residue chain is Putative 3-methyladenine DNA glycosylase (205 aa).

The protein belongs to the DNA glycosylase MPG family.

In Clostridium perfringens (strain 13 / Type A), this protein is Putative 3-methyladenine DNA glycosylase.